The chain runs to 102 residues: Parathymosin (102 aa).

The disordered stretch occupies residues 1-102 (MSEKSVEAAA…RQKTENGASA (102 aa)). At Ser-2 the chain carries N-acetylserine. Ser-2 bears the Phosphoserine mark. Lys-4 is subject to N6-acetyllysine. Phosphoserine occurs at positions 5 and 13. Positions 13 to 37 (SAKDLKEKKEKVEEKAGRKERKKEV) are enriched in basic and acidic residues. The residue at position 15 (Lys-15) is an N6-acetyllysine. The span at 38–76 (VEEEENGAEEEEEETAEDGEEEDDGDEEDEEEEEEEDEG) shows a compositional bias: acidic residues. Thr-52 bears the Phosphothreonine mark. Residue Lys-92 is modified to N6-acetyllysine.

It belongs to the pro/parathymosin family.

Functionally, parathymosin may mediate immune function by blocking the effect of prothymosin alpha which confers resistance to certain opportunistic infections. This is Parathymosin (PTMS) from Bos taurus (Bovine).